We begin with the raw amino-acid sequence, 217 residues long: Phosphatidylinositol phosphate synthase (217 aa).

A run of 2 helical transmembrane segments spans residues leucine 28–phenylalanine 49 and phenylalanine 55–methionine 74. Residue aspartate 31–threonine 34 participates in a CDP-1,2-diacyl-sn-glycerol binding. Positions 68 and 71 each coordinate Mg(2+). 3 residues coordinate a CDP-1,2-diacyl-sn-glycerol: glycine 72, arginine 76, and threonine 82. The Mg(2+) site is built by aspartate 89 and aspartate 93. Aspartate 93 functions as the Proton acceptor in the catalytic mechanism. A run of 4 helical transmembrane segments spans residues isoleucine 95 to methionine 112, valine 118 to alanine 136, leucine 156 to tryptophan 173, and valine 179 to tryptophan 200.

It belongs to the CDP-alcohol phosphatidyltransferase class-I family. As to quaternary structure, homodimer. The cofactor is Mg(2+).

It is found in the cell membrane. The catalysed reaction is a CDP-1,2-diacyl-sn-glycerol + 1D-myo-inositol 3-phosphate = a 1,2-diacyl-sn-glycero-3-phospho-(1D-myo-inositol-3-phosphate) + CMP + H(+). It carries out the reaction 1,2-di-(9Z-octadecenoyl)-sn-glycero-3-cytidine-5'-diphosphate + 1D-myo-inositol 3-phosphate = 1,2-di-(9Z-octadecenoyl)-sn-glycero-3-phospho-(1D-myo-inositol-3-phosphate) + CMP + H(+). Its pathway is phospholipid metabolism; phosphatidylinositol phosphate biosynthesis. Its activity is regulated as follows. Competitively inhibited by several inositol 1-phosphate analogs, including the phosphonate analog 1-deoxy-1-phosphonomethyl-myo-inositol (Ino-C-P). Functionally, catalyzes the conjugation of the 1'-hydroxyl group of D-myo-inositol-3-phosphate (also named L-myo-inositol-1-phosphate) with a lipid tail of cytidine diphosphate diacylglycerol (CDP-DAG), forming phosphatidylinositol phosphate (PIP) and CMP. PIP is a precursor of phosphatidylinositol (PI) which is an essential lipid for mycobacteria required for formation of their cell wall. The sequence is that of Phosphatidylinositol phosphate synthase from Mycobacterium bovis (strain BCG / Pasteur 1173P2).